The following is a 268-amino-acid chain: 14-3-3-like protein GF14 upsilon (268 aa).

A phosphoserine mark is found at Ser69 and Ser192. Thr213 carries the post-translational modification Phosphothreonine. The interval Glu243–Gln268 is disordered. Residues Asp246–Glu260 show a composition bias toward basic and acidic residues. Position 267 is a phosphoserine (Ser267).

This sequence belongs to the 14-3-3 family. As to quaternary structure, interacts with EDE1. Interacts with DREB1A and DREB1B in the nucleus. Interacts with CINV1.

It is found in the cytoplasm. Its subcellular location is the nucleus. Functionally, is associated with a DNA binding complex that binds to the G box, a well-characterized cis-acting DNA regulatory element found in plant genes. May be involved in cell cycle regulation by binding to soluble EDE1 and sequestering it in an inactive form during the early stages of mitosis. The chain is 14-3-3-like protein GF14 upsilon (GRF5) from Arabidopsis thaliana (Mouse-ear cress).